Here is a 149-residue protein sequence, read N- to C-terminus: Pleckstrin homology domain-containing family J member 1 (149 aa).

The 94-residue stretch at 15 to 108 (PAEKAAEILM…WIEALKRASY (94 aa)) folds into the PH domain.

This Gallus gallus (Chicken) protein is Pleckstrin homology domain-containing family J member 1 (PLEKHJ1).